Here is a 222-residue protein sequence, read N- to C-terminus: Probable nicotinate-nucleotide adenylyltransferase (222 aa).

Belongs to the NadD family.

The catalysed reaction is nicotinate beta-D-ribonucleotide + ATP + H(+) = deamido-NAD(+) + diphosphate. It participates in cofactor biosynthesis; NAD(+) biosynthesis; deamido-NAD(+) from nicotinate D-ribonucleotide: step 1/1. Functionally, catalyzes the reversible adenylation of nicotinate mononucleotide (NaMN) to nicotinic acid adenine dinucleotide (NaAD). The sequence is that of Probable nicotinate-nucleotide adenylyltransferase from Xylella fastidiosa (strain M12).